We begin with the raw amino-acid sequence, 289 residues long: MGNQFKTLALLAALSGLLIAISYWVIGGSSGLIIGIGLAAVTNLLSWYQSDKIALAVYRAQPVSESQAPRLYRMVQRLSQRANIPMPGVYIVPGQTANAFATGRDPEHAAVAVTEGILNILPEDELEAVIAHELTHIINRDTLTQAVAATVAGAISFLAQMVSYSLWFGGIGGRDNERGGNPLGVLLTVVLAPIAATIIQLAISRTREFSADAGSARLTGNPRALARALQRLEAAARQIPLNANPAFEPLLIINSISGQFLGNLFSSHPSTEARVQALLKLEKQLPTIA.

2 consecutive transmembrane segments (helical) span residues 8–28 (LALL…VIGG) and 29–49 (SSGL…SWYQ). Zn(2+) is bound at residue histidine 132. The active site involves glutamate 133. Residue histidine 136 coordinates Zn(2+). 2 helical membrane-spanning segments follow: residues 151-171 (VAGA…FGGI) and 183-203 (LGVL…QLAI). Residue glutamate 208 coordinates Zn(2+).

It belongs to the peptidase M48B family. Zn(2+) is required as a cofactor.

Its subcellular location is the cell inner membrane. The chain is Protease HtpX homolog from Trichormus variabilis (strain ATCC 29413 / PCC 7937) (Anabaena variabilis).